Reading from the N-terminus, the 1215-residue chain is Protein benign gonial cell neoplasm (1215 aa).

An ANK repeat occupies 407-439 (TGKTAVHFASELNKANHLRLLLFMGADPYIVDL). Thr898 is subject to Phosphothreonine.

As to quaternary structure, part of a complex composed of at least mei-P26, bam, bgcn and Sxl; this complex is involved in translational repression of nanos mRNA. Interacts with bam (via C-terminus); the interaction is direct. Interacts with mei-P26; the interaction is direct and does not require bam. Weakly interacts with wh/wuho; this interaction may be required for the function or formation of the mei-P26-bgcn-bam-Sxl complex. Part of a complex composed of at least tut, bam and bgcn; complex formation does not require RNA. Interacts with tut; the interaction is indirect and is mediated by bam. As part of the bam-bgcn-tut complex associates with twin; may recruit the CCR4-NOT1 deadenylation complex to mRNA 3'UTRs to mediate post-transcriptional regulation of expression. Expressed in testis and in 5-8 germline stem cells of ovaries, immediately adjacent to terminal filament. Expressed in ovarian germline cells throughout the germarium (at protein level).

Its function is as follows. Forms a complex with tut and bam involved in 3'UTR-dependent post-transcriptional repression of several 3'-RNA processing factors, which promotes germline stem cell lineage differentiation and mitosis-to-meiosis transition. Part of a complex with bam involved in 3'-UTR-dependent translational repression of a subset of mRNAs, including those for mei-P26, nanos and shg/E-cadherin; may act as a promiscuous RNA-binding protein tethering bam to its target mRNAs. Required for regulating the progression of gonialblast cells through transit amplification and differentiation into gametes. In Drosophila melanogaster (Fruit fly), this protein is Protein benign gonial cell neoplasm.